Consider the following 705-residue polypeptide: Putative membrane protein SCO0839 (705 aa).

12 helical membrane passes run 16–36, 177–197, 202–222, 237–257, 281–301, 316–336, 373–393, 529–549, 554–574, 587–607, 627–647, and 648–668; these read WLVP…LGPY, GIDG…LLLV, LLPL…CAIV, VQGI…LLLT, SWGA…ALLL, IGIV…LVLL, IWAL…TLSS, LIVP…LRSL, LLVA…ALVF, VPLY…IFLM, LTAT…TFAA, and LGVI…FGVL.

The protein belongs to the resistance-nodulation-cell division (RND) (TC 2.A.6) family. MmpL subfamily.

It localises to the cell membrane. The polypeptide is Putative membrane protein SCO0839 (Streptomyces coelicolor (strain ATCC BAA-471 / A3(2) / M145)).